The sequence spans 297 residues: 4-hydroxy-tetrahydrodipicolinate synthase (297 aa).

Thr-46 contacts pyruvate. Tyr-134 functions as the Proton donor/acceptor in the catalytic mechanism. Lys-162 acts as the Schiff-base intermediate with substrate in catalysis. Ile-204 lines the pyruvate pocket.

This sequence belongs to the DapA family. In terms of assembly, homotetramer; dimer of dimers.

The protein localises to the cytoplasm. The catalysed reaction is L-aspartate 4-semialdehyde + pyruvate = (2S,4S)-4-hydroxy-2,3,4,5-tetrahydrodipicolinate + H2O + H(+). It functions in the pathway amino-acid biosynthesis; L-lysine biosynthesis via DAP pathway; (S)-tetrahydrodipicolinate from L-aspartate: step 3/4. Its function is as follows. Catalyzes the condensation of (S)-aspartate-beta-semialdehyde [(S)-ASA] and pyruvate to 4-hydroxy-tetrahydrodipicolinate (HTPA). This is 4-hydroxy-tetrahydrodipicolinate synthase from Stenotrophomonas maltophilia (strain R551-3).